The sequence spans 339 residues: Uroporphyrinogen decarboxylase (339 aa).

Substrate-binding positions include 21-25 (RQAGR), F40, D71, Y147, S202, and H315.

It belongs to the uroporphyrinogen decarboxylase family. Homodimer.

It localises to the cytoplasm. The enzyme catalyses uroporphyrinogen III + 4 H(+) = coproporphyrinogen III + 4 CO2. The protein operates within porphyrin-containing compound metabolism; protoporphyrin-IX biosynthesis; coproporphyrinogen-III from 5-aminolevulinate: step 4/4. In terms of biological role, catalyzes the decarboxylation of four acetate groups of uroporphyrinogen-III to yield coproporphyrinogen-III. The sequence is that of Uroporphyrinogen decarboxylase from Helicobacter pylori (strain ATCC 700392 / 26695) (Campylobacter pylori).